The sequence spans 68 residues: Putative membrane protein insertion efficiency factor (68 aa).

Belongs to the UPF0161 family.

It localises to the cell inner membrane. In terms of biological role, could be involved in insertion of integral membrane proteins into the membrane. In Hydrogenobaculum sp. (strain Y04AAS1), this protein is Putative membrane protein insertion efficiency factor.